Consider the following 305-residue polypeptide: Uridylate cyclase (305 aa).

Positions 58 and 102 each coordinate Mn(2+).

Belongs to the adenylyl cyclase class-4/guanylyl cyclase family. Pyrimidine cyclase subfamily. As to quaternary structure, homodimer. Requires Mn(2+) as cofactor.

The protein localises to the cytoplasm. It carries out the reaction GTP = 3',5'-cyclic GMP + diphosphate. The enzyme catalyses UTP = 3',5'-cyclic UMP + diphosphate. Functionally, pycsar (pyrimidine cyclase system for antiphage resistance) provides immunity against bacteriophage. The pyrimidine cyclase (PycC) synthesizes cyclic nucleotides in response to infection; these serve as specific second messenger signals. The signals activate the adjacent effector, leading to bacterial cell death and abortive phage infection. A clade D Pycsar system. The pyrimidine cyclase gene of a two-gene Pycsar system, generates cyclic UMP (cUMP) from UTP as well as cGMP from GTP to a lesser extent, has little to no activity on ATP or CTP. Expression of this and adjacent effector MePycTM (AC A0A1C5G2D0) probably confers resistance to bacteriophage. The genes are probably only expressed in response to bacteriophage infection. This Micromonospora echinofusca protein is Uridylate cyclase.